A 31-amino-acid chain; its full sequence is Cytochrome b6-f complex subunit 6 (31 aa).

A helical transmembrane segment spans residues 4–24 (ITSYFGFLLAALTITSVLFIG).

This sequence belongs to the PetL family. In terms of assembly, the 4 large subunits of the cytochrome b6-f complex are cytochrome b6, subunit IV (17 kDa polypeptide, PetD), cytochrome f and the Rieske protein, while the 4 small subunits are PetG, PetL, PetM and PetN. The complex functions as a dimer.

It localises to the plastid. The protein localises to the chloroplast thylakoid membrane. In terms of biological role, component of the cytochrome b6-f complex, which mediates electron transfer between photosystem II (PSII) and photosystem I (PSI), cyclic electron flow around PSI, and state transitions. PetL is important for photoautotrophic growth as well as for electron transfer efficiency and stability of the cytochrome b6-f complex. The sequence is that of Cytochrome b6-f complex subunit 6 from Arabidopsis thaliana (Mouse-ear cress).